The chain runs to 1081 residues: Psi-producing oxygenase A (1081 aa).

Residues 105-446 (TKSFLNMLWN…DGAFNDDDLV (342 aa)) form a linoleate 8R-lipoxygenase region. Position 202 (His202) interacts with heme b. Tyr374 is a catalytic residue. His377 is a heme b binding site. The interval 654–1081 (IFISSHAACM…GELPQLKEDF (428 aa)) is 9,12-octadecadienoate 8-hydroperoxide 8R-isomerase.

Belongs to the peroxidase family. In terms of assembly, homotetramer. The cofactor is heme b.

The catalysed reaction is (9Z,12Z)-octadecadienoate + O2 = (8R,9Z,12Z)-8-hydroperoxyoctadeca-9,12-dienoate. The enzyme catalyses (8R,9Z,12Z)-8-hydroperoxyoctadeca-9,12-dienoate = (5S,8R,9Z,12Z)-5,8-dihydroxyoctadeca-9,12-dienoate. Functionally, bifunctional heme-containing enzyme that oxidizes linoleic acid to (8R,9Z,12Z)-8-hydroperoxyoctadeca-9,12-dienoate (within the N-terminal heme peroxidase domain), which is subsequently isomerized to (5S,8R,9Z,12Z)-5,8-dihydroxyoctadeca-9,12-dienoate (within the C-terminal P450 heme thiolate domain). Oxidized unsaturated fatty acids, so-called oxylipins, derived from endogenous fatty acids, influence the development of the asexual conidiophores and sexual cleistothecia and regulate the secondary metabolism. These substances were collectively named psi factors and are primarily a mixture of hydroxylated oleic, linoleic and alpha-linolenic acids. They are termed psi-beta, psi-alpha, and psi-gamma, respectively. This is Psi-producing oxygenase A (ppoA) from Emericella nidulans (Aspergillus nidulans).